We begin with the raw amino-acid sequence, 255 residues long: Lipoprotein-releasing system ATP-binding protein LolD 2 (255 aa).

An ABC transporter domain is found at 9–254 (LEARGIRKSY…SDSAKLETVA (246 aa)). ATP is bound at residue 45-52 (GRSGSGKS).

The protein belongs to the ABC transporter superfamily. Lipoprotein translocase (TC 3.A.1.125) family. As to quaternary structure, the complex is composed of two ATP-binding proteins (LolD) and two transmembrane proteins (LolC and LolE).

The protein resides in the cell inner membrane. Its function is as follows. Part of the ABC transporter complex LolCDE involved in the translocation of mature outer membrane-directed lipoproteins, from the inner membrane to the periplasmic chaperone, LolA. Responsible for the formation of the LolA-lipoprotein complex in an ATP-dependent manner. The polypeptide is Lipoprotein-releasing system ATP-binding protein LolD 2 (Rhodopirellula baltica (strain DSM 10527 / NCIMB 13988 / SH1)).